We begin with the raw amino-acid sequence, 232 residues long: Translation initiation factor IF-3 (232 aa).

Disordered stretches follow at residues 1-21 (MAIQ…RTNR) and 184-232 (LQSQ…AAQR). Residues 193-208 (AAAAAAPAAAPAAGAP) are compositionally biased toward low complexity. A compositionally biased stretch (pro residues) spans 209-222 (APTPAPAPAAPAPA). Low complexity predominate over residues 223–232 (PAAADPAAQR).

This sequence belongs to the IF-3 family. As to quaternary structure, monomer.

Its subcellular location is the cytoplasm. IF-3 binds to the 30S ribosomal subunit and shifts the equilibrium between 70S ribosomes and their 50S and 30S subunits in favor of the free subunits, thus enhancing the availability of 30S subunits on which protein synthesis initiation begins. The sequence is that of Translation initiation factor IF-3 from Anaeromyxobacter sp. (strain K).